The chain runs to 286 residues: Shikimate dehydrogenase (NADP(+)) (286 aa).

Shikimate is bound by residues 19 to 21 (SLS) and T66. The active-site Proton acceptor is the K70. Shikimate-binding residues include N91 and D107. Residues 129–133 (GSGGA) and L229 contribute to the NADP(+) site. Y231 contributes to the shikimate binding site. G252 serves as a coordination point for NADP(+).

This sequence belongs to the shikimate dehydrogenase family. In terms of assembly, homodimer.

It catalyses the reaction shikimate + NADP(+) = 3-dehydroshikimate + NADPH + H(+). The protein operates within metabolic intermediate biosynthesis; chorismate biosynthesis; chorismate from D-erythrose 4-phosphate and phosphoenolpyruvate: step 4/7. Involved in the biosynthesis of the chorismate, which leads to the biosynthesis of aromatic amino acids. Catalyzes the reversible NADPH linked reduction of 3-dehydroshikimate (DHSA) to yield shikimate (SA). This Prochlorococcus marinus (strain MIT 9312) protein is Shikimate dehydrogenase (NADP(+)).